Consider the following 65-residue polypeptide: Small ribosomal subunit protein eS31 (65 aa).

Cys-36, Cys-39, Cys-55, and Cys-58 together coordinate Zn(2+). The C4-type zinc finger occupies 36–58 (CPKCGSVMAFHREPVPRWHCGKC).

This sequence belongs to the eukaryotic ribosomal protein eS31 family. As to quaternary structure, part of the 30S ribosomal subunit. Zn(2+) is required as a cofactor.

The sequence is that of Small ribosomal subunit protein eS31 from Pyrobaculum calidifontis (strain DSM 21063 / JCM 11548 / VA1).